Consider the following 147-residue polypeptide: uncharacterized protein (147 aa).

The HTH LytTR-type domain maps to Leu44 to Ile147.

The protein localises to the cytoplasm. This is an uncharacterized protein from Staphylococcus aureus (strain MRSA252).